Consider the following 72-residue polypeptide: N-alpha-acetyltransferase 38, NatC auxiliary subunit (72 aa).

One can recognise a Sm domain in the interval 3–72 (NGEILLTSWL…KHIKSFSVRA (70 aa)).

In terms of assembly, component of the N-terminal acetyltransferase C (NatC) complex, composed of the catalytic subunit Naa30, a large auxiliary subunit Naa35 and a small auxiliary subunit Naa38.

It localises to the endoplasmic reticulum. In terms of biological role, component of the NatC N-terminal acetyltransferase, which associates with the ribosome to acetylate nascent protein chains in a cotranslational manner. NatC acetylates protein N-termini starting with methionine, followed by a hydrophobic or amphipathic amino acid, with amino acids at positions 3 and 4 also contributing to NatC recognition. The first 4 amino acids of cognate substrates are recognized at the Naa30-Naa35 interface. NatC-dependent acetylation targets various substrate proteins to specific subcellular sites. In Schizosaccharomyces pombe (strain 972 / ATCC 24843) (Fission yeast), this protein is N-alpha-acetyltransferase 38, NatC auxiliary subunit (naa38).